A 1171-amino-acid chain; its full sequence is Protein diaphanous homolog 3 (1171 aa).

Basic and acidic residues predominate over residues 1–15; the sequence is MERHRARALGRDSKS. A disordered region spans residues 1–40; it reads MERHRARALGRDSKSSRRKGLQSAPPAGPYEPGEKRPKLH. The Nuclear localization signal motif lies at 16–39; sequence SRRKGLQSAPPAGPYEPGEKRPKL. T47 bears the Phosphothreonine mark. Position 56 is a phosphoserine (S56). A disordered region spans residues 60–95; the sequence is PGSKKERPPLPHLKTVSGISDSSSLSSETMENNPKA. Residues 76–86 are compositionally biased toward low complexity; sequence SGISDSSSLSS. Positions 93–455 constitute a GBD/FH3 domain; it reads PKALPESEVL…QIVLHRDGTD (363 aa). Residue S154 is modified to Phosphoserine. 2 coiled-coil regions span residues 373–403 and 478–533; these read EHKEEDLSEFFHRLEDIRAELDEASDVYSML and QAKL…FGAL. Residues 532 to 601 form a disordered region; that stretch reads ALPPGTKIPL…PPPPLGFLGG (70 aa). An FH1 domain is found at 540-610; sequence PLQPSVEGEA…GQSSIPLNLP (71 aa). A compositionally biased stretch (pro residues) spans 553-596; that stretch reads ALPPAPPALSGGVPPPPPPPPPPPPPLPGMPMPFGGPVPPPPPL. S604 is subject to Phosphoserine. The 399-residue stretch at 615 to 1013 folds into the FH2 domain; the sequence is PKKEFKPEIS…EKRARIAKER (399 aa). Coiled coils occupy residues 887–918 and 988–1038; these read DKASRVSVEMLEKNVKQMGRQLQQLEKNLETF and MLAL…GDET. The DAD domain maps to 1036–1066; that stretch reads DETGVMDSLLEALQSGAAFRDRRKRTPKLKD. A phosphoserine mark is found at S1072 and S1157. The Nuclear export signal signature appears at 1162-1171; sequence EALLARLRAL.

This sequence belongs to the formin homology family. Diaphanous subfamily. Ubiquitinated.

It localises to the cytoplasm. The protein localises to the nucleus. Functionally, actin nucleation and elongation factor required for the assembly of F-actin structures, such as actin cables and stress fibers. Required for cytokinesis, stress fiber formation and transcriptional activation of the serum response factor. Binds to GTP-bound form of Rho and to profilin: acts in a Rho-dependent manner to recruit profilin to the membrane, where it promotes actin polymerization. DFR proteins couple Rho and Src tyrosine kinase during signaling and the regulation of actin dynamics. Also acts as an actin nucleation and elongation factor in the nucleus by promoting nuclear actin polymerization inside the nucleus to drive serum-dependent SRF-MRTFA activity. This Mus musculus (Mouse) protein is Protein diaphanous homolog 3 (Diaph3).